The sequence spans 236 residues: LexA repressor (236 aa).

A disordered region spans residues 1–25 (MNDSNDTSVAGGAAGADSRVLSADS). Positions 51–71 (IREIGDAVGLTSTSSVAHQLR) form a DNA-binding region, H-T-H motif. Active-site for autocatalytic cleavage activity residues include Ser160 and Lys197.

This sequence belongs to the peptidase S24 family. As to quaternary structure, homodimer.

The catalysed reaction is Hydrolysis of Ala-|-Gly bond in repressor LexA.. Functionally, represses a number of genes involved in the response to DNA damage (SOS response), including recA and lexA. In the presence of single-stranded DNA, RecA interacts with LexA causing an autocatalytic cleavage which disrupts the DNA-binding part of LexA, leading to derepression of the SOS regulon and eventually DNA repair. The sequence is that of LexA repressor from Mycobacterium bovis (strain BCG / Pasteur 1173P2).